The sequence spans 153 residues: MSHPLPPNIQEILQLLPHRYPFLLVDRVIEFNAGKYIKAYKNVSINEPFFQGHFPGFPVMPGVLILEAMAQSGGITVLQSFPINELQGKVFLFAGIENVKFRQQVIPGDQLILECEIIRHKLQLWKMSCQAFVNNKLVAEAILTAAMTNKENF.

Residue His-53 is part of the active site.

This sequence belongs to the thioester dehydratase family. FabZ subfamily.

The protein localises to the cytoplasm. The catalysed reaction is a (3R)-hydroxyacyl-[ACP] = a (2E)-enoyl-[ACP] + H2O. Functionally, involved in unsaturated fatty acids biosynthesis. Catalyzes the dehydration of short chain beta-hydroxyacyl-ACPs and long chain saturated and unsaturated beta-hydroxyacyl-ACPs. This Lawsonia intracellularis (strain PHE/MN1-00) protein is 3-hydroxyacyl-[acyl-carrier-protein] dehydratase FabZ.